We begin with the raw amino-acid sequence, 119 residues long: uncharacterized protein (119 aa).

This is an uncharacterized protein from Escherichia coli (Bacteriophage T4).